The primary structure comprises 103 residues: c-Myc-binding protein (103 aa).

Belongs to the AMY1 family. As to quaternary structure, binds via its C-terminal region to the N-terminal region of MYC. Associates with AKAP1/S-AKAP84. Interacts with MYCBPAP. Interacts with CFAP91. As to expression, highly expressed in heart, placenta, pancreas, skeletal muscle and kidney. Also present at low levels in lung.

It localises to the cytoplasm. The protein localises to the nucleus. Its subcellular location is the mitochondrion. May control the transcriptional activity of MYC. Stimulates the activation of E box-dependent transcription by MYC. The chain is c-Myc-binding protein from Homo sapiens (Human).